We begin with the raw amino-acid sequence, 456 residues long: MTOR-associated protein MEAK7 (456 aa).

The N-myristoyl glycine moiety is linked to residue Gly-2. The TLDc domain maps to 244–412 (SILDVLSVMY…FDKMEVWAVG (169 aa)).

Interacts (via C-terminal domain) with MTOR and MLST8; the interaction with MTOR increases upon nutrient stimulation.

It is found in the membrane. Its subcellular location is the cytoplasm. The protein resides in the lysosome. In terms of biological role, activates an alternative mTOR signaling through RPS6KB2 activation and EIF4EBP1 repression to regulate cell proliferation and migration. Recruits MTOR at the lysosome, essential for MTOR signaling at the lysosome. This Homo sapiens (Human) protein is MTOR-associated protein MEAK7.